We begin with the raw amino-acid sequence, 126 residues long: Small ribosomal subunit protein uS12 (126 aa).

Asp-89 bears the 3-methylthioaspartic acid mark. The disordered stretch occupies residues 106–126 (GVRERRRSRSKYGAKMPRSAA).

The protein belongs to the universal ribosomal protein uS12 family. In terms of assembly, part of the 30S ribosomal subunit. Contacts proteins S8 and S17. May interact with IF1 in the 30S initiation complex.

With S4 and S5 plays an important role in translational accuracy. Functionally, interacts with and stabilizes bases of the 16S rRNA that are involved in tRNA selection in the A site and with the mRNA backbone. Located at the interface of the 30S and 50S subunits, it traverses the body of the 30S subunit contacting proteins on the other side and probably holding the rRNA structure together. The combined cluster of proteins S8, S12 and S17 appears to hold together the shoulder and platform of the 30S subunit. This Tremblaya princeps protein is Small ribosomal subunit protein uS12.